A 238-amino-acid polypeptide reads, in one-letter code: Uridylate kinase (238 aa).

12-15 (KLSG) contributes to the ATP binding site. UMP is bound at residue G54. 2 residues coordinate ATP: G55 and R59. Residues D74 and 135–142 (TGNPFFTT) each bind UMP. Positions 162, 168, and 171 each coordinate ATP.

Belongs to the UMP kinase family. As to quaternary structure, homohexamer.

It is found in the cytoplasm. The catalysed reaction is UMP + ATP = UDP + ADP. It functions in the pathway pyrimidine metabolism; CTP biosynthesis via de novo pathway; UDP from UMP (UMPK route): step 1/1. Its activity is regulated as follows. Inhibited by UTP. Catalyzes the reversible phosphorylation of UMP to UDP. In Dechloromonas aromatica (strain RCB), this protein is Uridylate kinase.